The chain runs to 168 residues: G/U mismatch-specific DNA glycosylase (168 aa).

This sequence belongs to the uracil-DNA glycosylase (UDG) superfamily. TDG/mug family. As to quaternary structure, binds DNA as a monomer.

The protein localises to the cytoplasm. It carries out the reaction Specifically hydrolyzes mismatched double-stranded DNA and polynucleotides, releasing free uracil.. Its function is as follows. Excises ethenocytosine and uracil, which can arise by alkylation or deamination of cytosine, respectively, from the corresponding mispairs with guanine in ds-DNA. It is capable of hydrolyzing the carbon-nitrogen bond between the sugar-phosphate backbone of the DNA and the mispaired base. The complementary strand guanine functions in substrate recognition. Required for DNA damage lesion repair in stationary-phase cells. The polypeptide is G/U mismatch-specific DNA glycosylase (Escherichia coli (strain SMS-3-5 / SECEC)).